Consider the following 201-residue polypeptide: Putative manganese efflux pump MntP 2 (201 aa).

Transmembrane regions (helical) follow at residues 3-23, 39-59, 65-85, 116-136, 141-161, and 176-196; these read LISVILISIGLSMDAFAVSIT, IGLFFGGFQALMPLIGWSIGI, IAALDHWIALILLSIIGGKMI, LILLAIATSIDALAVGVSFAF, IINTIIIIGSITFVICFIGVM, and ILGGVVLILIGVKIFIQHTNI.

It belongs to the MntP (TC 9.B.29) family.

The protein localises to the cell membrane. In terms of biological role, probably functions as a manganese efflux pump. The chain is Putative manganese efflux pump MntP 2 from Clostridium botulinum (strain Hall / ATCC 3502 / NCTC 13319 / Type A).